A 99-amino-acid polypeptide reads, in one-letter code: NADH-quinone oxidoreductase subunit K (99 aa).

Transmembrane regions (helical) follow at residues 3–23 (PDNY…GVML), 28–48 (IVVF…FVTF), and 59–79 (VIAF…LGII).

Belongs to the complex I subunit 4L family. In terms of assembly, NDH-1 is composed of 14 different subunits. Subunits NuoA, H, J, K, L, M, N constitute the membrane sector of the complex.

It localises to the cell membrane. It catalyses the reaction a quinone + NADH + 5 H(+)(in) = a quinol + NAD(+) + 4 H(+)(out). Functionally, NDH-1 shuttles electrons from NADH, via FMN and iron-sulfur (Fe-S) centers, to quinones in the respiratory chain. The immediate electron acceptor for the enzyme in this species is believed to be a menaquinone. Couples the redox reaction to proton translocation (for every two electrons transferred, four hydrogen ions are translocated across the cytoplasmic membrane), and thus conserves the redox energy in a proton gradient. The polypeptide is NADH-quinone oxidoreductase subunit K (Mycobacteroides abscessus (strain ATCC 19977 / DSM 44196 / CCUG 20993 / CIP 104536 / JCM 13569 / NCTC 13031 / TMC 1543 / L948) (Mycobacterium abscessus)).